Here is a 378-residue protein sequence, read N- to C-terminus: Mating-type protein MAT-1 (378 aa).

The alpha box DNA-binding region spans 60–117 (KARKALNAFVGFRCYYITIPMFKPWPMKKLSNLIGLLWEADPNKSLWSLMAKPWSTIR).

It belongs to the MATALPHA1 family.

It is found in the nucleus. Functionally, mating type proteins are sequence specific DNA-binding proteins that act as master switches in fungal differentiation by controlling gene expression in a cell type-specific fashion. Transcriptional activator that induces the transcription of alpha-specific genes. This Cochliobolus sativus (Common root rot and spot blotch fungus) protein is Mating-type protein MAT-1 (MAT1).